A 2056-amino-acid polypeptide reads, in one-letter code: E3 ubiquitin-protein ligase TRIP12 (2056 aa).

2 stretches are compositionally biased toward polar residues: residues 1–10 (MSSRPNNNPG) and 18–27 (RNTAGAQPQE). The tract at residues 1-440 (MSSRPNNNPG…SGESESDDSE (440 aa)) is disordered. Over residues 39–51 (AENKTHSLPESRK) the composition is skewed to basic and acidic residues. Polar residues-rich tracts occupy residues 58-67 (KVQSNTTSGP) and 153-168 (SQEQ…STSK). Composition is skewed to low complexity over residues 213 to 226 (LSKL…SAKA) and 234 to 253 (SSSS…VSAA). Composition is skewed to polar residues over residues 317–327 (PGSSKTETSKP) and 363–375 (QKTT…TSRR). A compositionally biased stretch (basic and acidic residues) spans 383 to 395 (AAAEARRQEKMAD). Residues 415–433 (GAAASSSVAGAVGMTTSGE) show a composition bias toward low complexity. A WWE domain is found at 791–905 (MLKKGNAQNT…DPELAKSFIK (115 aa)). Positions 1027-1042 (TTISTGSGTASGNSAA) are enriched in low complexity. Disordered regions lie at residues 1027–1147 (TTIS…ASKD), 1465–1500 (EEEE…DELW), and 1632–1651 (TNPE…PRLD). Residues 1069-1082 (KRKRLPKRGPRRPK) show a composition bias toward basic residues. A compositionally biased stretch (basic and acidic residues) spans 1085 to 1094 (PPRDEDKVDN). Polar residues-rich tracts occupy residues 1095 to 1106 (QAKSPTTTQSPK) and 1119 to 1129 (RLSTQSNSNNI). The tract at residues 1560–1634 (EIIPTSEFNN…AMQRLLDTNP (75 aa)) is K-box. The region spanning 1949–2056 (PDHGYTHDSR…REGQQSFHLS (108 aa)) is the HECT domain. Cys-2023 (glycyl thioester intermediate) is an active-site residue.

This sequence belongs to the UPL family. K-HECT subfamily.

The protein localises to the nucleus. The protein resides in the nucleoplasm. The enzyme catalyses S-ubiquitinyl-[E2 ubiquitin-conjugating enzyme]-L-cysteine + [acceptor protein]-L-lysine = [E2 ubiquitin-conjugating enzyme]-L-cysteine + N(6)-ubiquitinyl-[acceptor protein]-L-lysine.. It participates in protein modification; protein ubiquitination. Its function is as follows. E3 ubiquitin-protein ligase involved in ubiquitin fusion degradation (UFD) pathway and regulation of DNA repair. Part of the ubiquitin fusion degradation (UFD) pathway, a process that mediates ubiquitination of protein at their N-terminus, regardless of the presence of lysine residues in target proteins. Acts as a key regulator of DNA damage response by acting as a suppressor of RNF168, an E3 ubiquitin-protein ligase that promotes accumulation of 'Lys-63'-linked histone H2A and H2AX at DNA damage sites, thereby acting as a guard against excessive spreading of ubiquitinated chromatin at damaged chromosomes. This chain is E3 ubiquitin-protein ligase TRIP12 (trip12), found in Xenopus tropicalis (Western clawed frog).